A 193-amino-acid polypeptide reads, in one-letter code: Transcriptional activator GvpE2 (193 aa).

Residue 143-148 (KRKVYR) participates in DNA binding. The interval 153-184 (QAAIEHVDSVVLQLLTFAVGLQTIMADCIVNQ) is leucine-zipper.

Homodimer. Interacts with endogenous GvpD, also with GvpD from H.mediterranei.

It localises to the cytoplasm. With respect to regulation, degraded once GvpD is translated; degradation requires 'Arg-494' of GvpD; tested in transgenic H.volcanii. Fusion of green fluorescent protein to its C-terminus partially protects it from degradation. In terms of biological role, plays a regulatory role in gas vesicle synthesis, required to activate transcription of the c-gvpA operon. Gas vesicles are hollow, gas filled proteinaceous nanostructures found in several microbial planktonic microorganisms. They allow positioning of halobacteria at the optimal depth for growth in the poorly aerated, shallow brine pools of their habitat. Functionally, expression of 2 c-vac DNA fragments containing 2 divergently transcribed regions (gvpE-gvpF-gvpG-gvpH-gvpI-gvpJ-gvpK-gvpL-gvpM and gvpA-gvpC-gvpN-gvpO) allows H.volcanii to produce gas vesicles. All site-directed mutagenesis is tested in H.volcanii. In Halobacterium salinarum (strain ATCC 700922 / JCM 11081 / NRC-1) (Halobacterium halobium), this protein is Transcriptional activator GvpE2.